The sequence spans 340 residues: 4-amino-5-hydroxymethyl-2-methylpyrimidine phosphate synthase THI12 (340 aa).

Residue K62 is modified to N6-(pyridoxal phosphate)lysine. H66 is an active-site residue. 115–118 lines the pyridoxal 5'-phosphate pocket; sequence GEFG. Residues 195 to 199 carry the CCCFC; essential for catalytic activity, may be the site of iron coordination motif; that stretch reads CCCFC.

It belongs to the NMT1/THI5 family. As to quaternary structure, homodimer. Requires Fe cation as cofactor.

The enzyme catalyses N(6)-(pyridoxal phosphate)-L-lysyl-[4-amino-5-hydroxymethyl-2-methylpyrimidine phosphate synthase] + L-histidyl-[4-amino-5-hydroxymethyl-2-methylpyrimidine phosphate synthase] + 2 Fe(3+) + 4 H2O = L-lysyl-[4-amino-5-hydroxymethyl-2-methylpyrimidine phosphate synthase] + (2S)-2-amino-5-hydroxy-4-oxopentanoyl-[4-amino-5-hydroxymethyl-2-methylpyrimidine phosphate synthase] + 4-amino-2-methyl-5-(phosphooxymethyl)pyrimidine + 3-oxopropanoate + 2 Fe(2+) + 2 H(+). The protein operates within cofactor biosynthesis; thiamine diphosphate biosynthesis. In terms of biological role, responsible for the formation of the pyrimidine heterocycle in the thiamine biosynthesis pathway. Catalyzes the formation of hydroxymethylpyrimidine phosphate (HMP-P) from histidine and pyridoxal phosphate (PLP). The protein uses PLP and the active site histidine to form HMP-P, generating an inactive enzyme. The enzyme can only undergo a single turnover, which suggests it is a suicide enzyme. The sequence is that of 4-amino-5-hydroxymethyl-2-methylpyrimidine phosphate synthase THI12 from Saccharomyces cerevisiae (strain ATCC 204508 / S288c) (Baker's yeast).